The chain runs to 188 residues: Ribosome-recycling factor (188 aa).

This sequence belongs to the RRF family.

It localises to the cytoplasm. Functionally, responsible for the release of ribosomes from messenger RNA at the termination of protein biosynthesis. May increase the efficiency of translation by recycling ribosomes from one round of translation to another. The sequence is that of Ribosome-recycling factor from Cereibacter sphaeroides (strain ATCC 17023 / DSM 158 / JCM 6121 / CCUG 31486 / LMG 2827 / NBRC 12203 / NCIMB 8253 / ATH 2.4.1.) (Rhodobacter sphaeroides).